The primary structure comprises 466 residues: Arginine biosynthesis bifunctional protein ArgJ, mitochondrial (466 aa).

T194, K223, T234, E321, N461, and T466 together coordinate substrate. T234 serves as the catalytic Nucleophile.

The protein belongs to the ArgJ family. Heterodimer of an alpha and a beta chain. In terms of processing, the alpha and beta chains are autoproteolytically processed from a single precursor protein within the mitochondrion.

It localises to the mitochondrion matrix. It carries out the reaction N(2)-acetyl-L-ornithine + L-glutamate = N-acetyl-L-glutamate + L-ornithine. The enzyme catalyses L-glutamate + acetyl-CoA = N-acetyl-L-glutamate + CoA + H(+). It functions in the pathway amino-acid biosynthesis; L-arginine biosynthesis; L-ornithine and N-acetyl-L-glutamate from L-glutamate and N(2)-acetyl-L-ornithine (cyclic): step 1/1. It participates in amino-acid biosynthesis; L-arginine biosynthesis; N(2)-acetyl-L-ornithine from L-glutamate: step 1/4. Its function is as follows. Catalyzes two activities which are involved in the cyclic version of arginine biosynthesis: the synthesis of acetylglutamate from glutamate and acetyl-CoA, and of ornithine by transacetylation between acetylornithine and glutamate. This Aspergillus flavus (strain ATCC 200026 / FGSC A1120 / IAM 13836 / NRRL 3357 / JCM 12722 / SRRC 167) protein is Arginine biosynthesis bifunctional protein ArgJ, mitochondrial.